We begin with the raw amino-acid sequence, 393 residues long: S-adenosylmethionine synthase (393 aa).

Glu9 contributes to the Mg(2+) binding site. Residue His15 coordinates ATP. Asp17 contacts Mg(2+). Glu43 is a binding site for K(+). Glu56 and Gln99 together coordinate L-methionine. ATP contacts are provided by residues 167-169, 235-238, Asp246, 252-253, Ala269, Lys273, and Lys277; these read DGK, SGRF, and RK. Residue Asp246 coordinates L-methionine. Residue Lys277 participates in L-methionine binding.

This sequence belongs to the AdoMet synthase family. Homotetramer; dimer of dimers. It depends on Mn(2+) as a cofactor. Requires Mg(2+) as cofactor. Co(2+) is required as a cofactor. The cofactor is K(+).

It is found in the cytoplasm. It catalyses the reaction L-methionine + ATP + H2O = S-adenosyl-L-methionine + phosphate + diphosphate. Its pathway is amino-acid biosynthesis; S-adenosyl-L-methionine biosynthesis; S-adenosyl-L-methionine from L-methionine: step 1/1. Its activity is regulated as follows. Increased activity in the presence of 25 percent acetonitrile, methanol or dimethylformamide. Catalyzes the formation of S-adenosylmethionine from methionine and ATP. This is S-adenosylmethionine synthase from Acacia koa (Koa tree).